Here is a 234-residue protein sequence, read N- to C-terminus: Accessory gland protein Acp29AB (234 aa).

Positions M1 to G21 are cleaved as a signal peptide. N-linked (GlcNAc...) asparagine glycosylation is found at N61 and N164. Positions V137–A234 constitute a C-type lectin domain. Cystine bridges form between C139/C228 and C207/C220.

In terms of tissue distribution, main cells of the accessory gland and in seminal fluid.

Its subcellular location is the secreted. In terms of biological role, responsible for physiological and behavioral changes in mated female flies. The chain is Accessory gland protein Acp29AB (Acp29AB) from Drosophila melanogaster (Fruit fly).